A 354-amino-acid chain; its full sequence is Uroporphyrinogen decarboxylase (354 aa).

Residues 27–31 (RQAGR), D77, Y154, T209, and H327 contribute to the substrate site.

This sequence belongs to the uroporphyrinogen decarboxylase family. Homodimer.

It localises to the cytoplasm. The enzyme catalyses uroporphyrinogen III + 4 H(+) = coproporphyrinogen III + 4 CO2. The protein operates within porphyrin-containing compound metabolism; protoporphyrin-IX biosynthesis; coproporphyrinogen-III from 5-aminolevulinate: step 4/4. Its function is as follows. Catalyzes the decarboxylation of four acetate groups of uroporphyrinogen-III to yield coproporphyrinogen-III. The protein is Uroporphyrinogen decarboxylase of Escherichia coli (strain 55989 / EAEC).